A 36-amino-acid polypeptide reads, in one-letter code: U-limacoditoxin(7)-Dv63 (36 aa).

The first 19 residues, 1 to 19 (MFKPRVILLITIIAVFSEF), serve as a signal peptide directing secretion.

It belongs to the limacoditoxin-7 family. As to expression, expressed by the venom secretory cell of the spine. The spine is a cuticular structure containing a single large nucleated venom-secreting cell at its base. It is an independent unit capable of producing, storing and injecting venom. On the back of D.vulnerans caterpillars, spines are grouped together by 50 to 100 to form scoli, of which there are eight in D.vulnerans.

The protein localises to the secreted. Its function is as follows. Peptide with insecticidal and antiparasitic activities. Induces irreversible paralysis in D.melanogaster when tested at high doses. It shows a moderate antiparasitic activity against the major pathogenic nematode of ruminants (H.contortus, EC(50)=41.3 uM). Does not show antimicrobial activities. Does not induce increase in intracellular calcium in mouse DRG neurons, suggesting that it does not induce pain. The sequence is that of U-limacoditoxin(7)-Dv63 from Doratifera vulnerans (Mottled cup moth).